The sequence spans 281 residues: Pantothenate synthetase (281 aa).

30-37 contributes to the ATP binding site; it reads MGNLHLGH. His-37 (proton donor) is an active-site residue. Gln-61 contacts (R)-pantoate. Residue Gln-61 participates in beta-alanine binding. 149–152 serves as a coordination point for ATP; sequence GRKD. Residue Gln-155 coordinates (R)-pantoate. ATP is bound by residues Ile-178 and 186 to 189; that span reads MSSR.

The protein belongs to the pantothenate synthetase family. In terms of assembly, homodimer.

It is found in the cytoplasm. The enzyme catalyses (R)-pantoate + beta-alanine + ATP = (R)-pantothenate + AMP + diphosphate + H(+). The protein operates within cofactor biosynthesis; (R)-pantothenate biosynthesis; (R)-pantothenate from (R)-pantoate and beta-alanine: step 1/1. In terms of biological role, catalyzes the condensation of pantoate with beta-alanine in an ATP-dependent reaction via a pantoyl-adenylate intermediate. In Shewanella woodyi (strain ATCC 51908 / MS32), this protein is Pantothenate synthetase.